Consider the following 329-residue polypeptide: Small ribosomal subunit protein uS2 (329 aa).

The protein belongs to the universal ribosomal protein uS2 family.

The sequence is that of Small ribosomal subunit protein uS2 from Bradyrhizobium sp. (strain ORS 278).